The sequence spans 296 residues: Ribosomal RNA small subunit methyltransferase A (296 aa).

S-adenosyl-L-methionine is bound by residues N30, L32, G57, E78, D103, and N128.

It belongs to the class I-like SAM-binding methyltransferase superfamily. rRNA adenine N(6)-methyltransferase family. RsmA subfamily.

It localises to the cytoplasm. The enzyme catalyses adenosine(1518)/adenosine(1519) in 16S rRNA + 4 S-adenosyl-L-methionine = N(6)-dimethyladenosine(1518)/N(6)-dimethyladenosine(1519) in 16S rRNA + 4 S-adenosyl-L-homocysteine + 4 H(+). Functionally, specifically dimethylates two adjacent adenosines (A1518 and A1519) in the loop of a conserved hairpin near the 3'-end of 16S rRNA in the 30S particle. May play a critical role in biogenesis of 30S subunits. The sequence is that of Ribosomal RNA small subunit methyltransferase A from Staphylococcus epidermidis (strain ATCC 35984 / DSM 28319 / BCRC 17069 / CCUG 31568 / BM 3577 / RP62A).